Consider the following 229-residue polypeptide: Large ribosomal subunit protein uL1 (229 aa).

It belongs to the universal ribosomal protein uL1 family. In terms of assembly, part of the 50S ribosomal subunit.

Functionally, binds directly to 23S rRNA. The L1 stalk is quite mobile in the ribosome, and is involved in E site tRNA release. Protein L1 is also a translational repressor protein, it controls the translation of the L11 operon by binding to its mRNA. The polypeptide is Large ribosomal subunit protein uL1 (Rhodopseudomonas palustris (strain TIE-1)).